A 423-amino-acid chain; its full sequence is Serine--tRNA ligase (423 aa).

231 to 233 (TGE) contacts L-serine. ATP is bound at residue 262 to 264 (RSE). An L-serine-binding site is contributed by Glu-285. Residue 349–352 (EISS) coordinates ATP. Ser-385 contacts L-serine.

It belongs to the class-II aminoacyl-tRNA synthetase family. Type-1 seryl-tRNA synthetase subfamily. In terms of assembly, homodimer. The tRNA molecule binds across the dimer.

It localises to the cytoplasm. It carries out the reaction tRNA(Ser) + L-serine + ATP = L-seryl-tRNA(Ser) + AMP + diphosphate + H(+). The enzyme catalyses tRNA(Sec) + L-serine + ATP = L-seryl-tRNA(Sec) + AMP + diphosphate + H(+). It participates in aminoacyl-tRNA biosynthesis; selenocysteinyl-tRNA(Sec) biosynthesis; L-seryl-tRNA(Sec) from L-serine and tRNA(Sec): step 1/1. Its function is as follows. Catalyzes the attachment of serine to tRNA(Ser). Is also able to aminoacylate tRNA(Sec) with serine, to form the misacylated tRNA L-seryl-tRNA(Sec), which will be further converted into selenocysteinyl-tRNA(Sec). The chain is Serine--tRNA ligase from Coxiella burnetii (strain CbuG_Q212) (Coxiella burnetii (strain Q212)).